The chain runs to 130 residues: Small ribosomal subunit protein uS8 (130 aa).

It belongs to the universal ribosomal protein uS8 family. Part of the 30S ribosomal subunit.

Its function is as follows. One of the primary rRNA binding proteins, it binds directly to 16S rRNA central domain where it helps coordinate assembly of the platform of the 30S subunit. The sequence is that of Small ribosomal subunit protein uS8 from Thermococcus gammatolerans (strain DSM 15229 / JCM 11827 / EJ3).